We begin with the raw amino-acid sequence, 273 residues long: 5-deoxy-glucuronate isomerase (273 aa).

The protein belongs to the isomerase IolB family.

It carries out the reaction 5-deoxy-D-glucuronate = 5-dehydro-2-deoxy-D-gluconate. It functions in the pathway polyol metabolism; myo-inositol degradation into acetyl-CoA; acetyl-CoA from myo-inositol: step 4/7. Involved in the isomerization of 5-deoxy-glucuronate (5DG) to 5-dehydro-2-deoxy-D-gluconate (DKG or 2-deoxy-5-keto-D-gluconate). This is 5-deoxy-glucuronate isomerase from Listeria innocua serovar 6a (strain ATCC BAA-680 / CLIP 11262).